A 343-amino-acid chain; its full sequence is Flap endonuclease 1 (343 aa).

Positions 1–98 (MGVPIGELIP…KELEKRREAR (98 aa)) are N-domain. Residues Asp27, Asp80, Glu152, Glu154, Asp173, Asp175, and Asp236 each contribute to the Mg(2+) site. The I-domain stretch occupies residues 116-258 (EARKYAQRAT…KALEIVKYSK (143 aa)). The interval 330 to 338 (KQSTLESWF) is interaction with PCNA.

Belongs to the XPG/RAD2 endonuclease family. FEN1 subfamily. As to quaternary structure, interacts with PCNA. PCNA stimulates the nuclease activity without altering cleavage specificity. It depends on Mg(2+) as a cofactor.

In terms of biological role, structure-specific nuclease with 5'-flap endonuclease and 5'-3' exonuclease activities involved in DNA replication and repair. During DNA replication, cleaves the 5'-overhanging flap structure that is generated by displacement synthesis when DNA polymerase encounters the 5'-end of a downstream Okazaki fragment. Binds the unpaired 3'-DNA end and kinks the DNA to facilitate 5' cleavage specificity. Cleaves one nucleotide into the double-stranded DNA from the junction in flap DNA, leaving a nick for ligation. Also involved in the base excision repair (BER) pathway. Acts as a genome stabilization factor that prevents flaps from equilibrating into structures that lead to duplications and deletions. Also possesses 5'-3' exonuclease activity on nicked or gapped double-stranded DNA. In Pyrococcus abyssi (strain GE5 / Orsay), this protein is Flap endonuclease 1.